Consider the following 244-residue polypeptide: Protein A47 (244 aa).

This sequence belongs to the orthopoxvirus A47 protein family.

In Variola virus, this protein is Protein A47.